A 473-amino-acid polypeptide reads, in one-letter code: Probable acid phosphatase DDB_G0284755 (473 aa).

H94 acts as the Nucleophile in catalysis. D359 serves as the catalytic Proton donor.

It belongs to the histidine acid phosphatase family.

The catalysed reaction is a phosphate monoester + H2O = an alcohol + phosphate. This chain is Probable acid phosphatase DDB_G0284755, found in Dictyostelium discoideum (Social amoeba).